The following is a 107-amino-acid chain: SH3 domain-binding glutamic acid-rich-like protein 2 (107 aa).

An SH3-binding motif is present at residues 61-67; it reads QGNPLPP.

It belongs to the SH3BGR family.

Its subcellular location is the nucleus. This is SH3 domain-binding glutamic acid-rich-like protein 2 (Sh3bgrl2) from Mus musculus (Mouse).